The primary structure comprises 780 residues: MASAEATPQQQIDQLKVNAGWDMKSNIKAGLLHHEEMEKKATKTVTEYIEKFADVLEENVLRFLQDNAEMLELCIYMYEQLPAYKAVKSRGILSAKRFYDTYVLRTADGSCYESVSHCFMRIAAFCTVQVLTNSALKITILYLGRDKLFKDLPCSPTMDLFIYFFSPLSHQLVCCATPIMRSAGLRDANLASCFLINPDLSTEKSTTTALLQELTMLLSAKSGVGCNVTSFGVDEKCIQSCVGLINSQVEFFNDQNPRPVSVAAYMEVWHSQIQEFLAVKLPENPSRCASIYQGLCIPKLFFEKFIEDPGQNWYLFKPEKSGNLANLYGDEFRSEYERLVGIGCYADAIPIKSLMFLIINTIIKTGSPYIIYKEACNEHHWKNMEGCAIASANLCAEVIQYPGADVSTCNLANVCLPMCLVTVSNDSHSPLEKTYCGNVIESQAVSGVGFSMPILHAAVEVAVFLVNCAIAGGKCVTPGMERGQRERSMGIGVHGLADVFAEMGYSYLDERAARLDVEIFENMYFRAVKTSNNICRLGGGRPFEGWGESKLRHGFFHWQGWEDVNLSIPITEWEKLSRRCISSGVYNSQFIALMPTVGSSLLTGFSESYYPYFANISSKVSSKEEVMKPNMTFWNRVSKEDLDTVRFFSGDVALFPEPLKEKYSLFLSAFDYCAEKQLARARLRAPFVDQSQSHSFHLKEENVVSARFLKDLILSGYTLGLKTIMYYCKVKKQSTMSSFQCLRDQNKSEMTGNDQGVEPESYIKCTAAGGETSEACLHCQ.

Substrate is bound by residues threonine 177, 192–193 (SC), glycine 223, 393–397 (NLCAE), and 595–599 (PTVGS). Cysteine 193 and cysteine 409 are disulfide-bonded. Residue asparagine 393 is the Proton acceptor of the active site. The Cysteine radical intermediate role is filled by cysteine 395. Glutamate 397 (proton acceptor) is an active-site residue.

The protein belongs to the ribonucleoside diphosphate reductase large chain family. In terms of assembly, heterotetramer composed of a homodimer of the large subunit (R1) and a homodimer of the small subunit (R2). Larger multisubunit protein complex are also active, composed of (R1)n(R2)n.

The enzyme catalyses a 2'-deoxyribonucleoside 5'-diphosphate + [thioredoxin]-disulfide + H2O = a ribonucleoside 5'-diphosphate + [thioredoxin]-dithiol. Ribonucleoside-diphosphate reductase holoenzyme provides the precursors necessary for viral DNA synthesis. Allows virus growth in non-dividing cells, as well as reactivation from latency in infected hosts. Catalyzes the biosynthesis of deoxyribonucleotides from the corresponding ribonucleotides. The polypeptide is Ribonucleoside-diphosphate reductase large subunit (Connochaetes taurinus (Blue wildebeest)).